We begin with the raw amino-acid sequence, 367 residues long: Alanine racemase (367 aa).

Catalysis depends on Lys-40, which acts as the Proton acceptor; specific for D-alanine. Lys-40 is subject to N6-(pyridoxal phosphate)lysine. Arg-136 is a substrate binding site. Catalysis depends on Tyr-263, which acts as the Proton acceptor; specific for L-alanine. Residue Met-310 participates in substrate binding.

Belongs to the alanine racemase family. Pyridoxal 5'-phosphate serves as cofactor.

The catalysed reaction is L-alanine = D-alanine. It participates in amino-acid biosynthesis; D-alanine biosynthesis; D-alanine from L-alanine: step 1/1. Catalyzes the interconversion of L-alanine and D-alanine. May also act on other amino acids. The sequence is that of Alanine racemase (alr) from Streptococcus thermophilus (strain ATCC BAA-491 / LMD-9).